Here is a 413-residue protein sequence, read N- to C-terminus: Glutamate-1-semialdehyde 2,1-aminomutase (413 aa).

Lys-260 carries the post-translational modification N6-(pyridoxal phosphate)lysine.

It belongs to the class-III pyridoxal-phosphate-dependent aminotransferase family. HemL subfamily. Pyridoxal 5'-phosphate serves as cofactor.

Its subcellular location is the cytoplasm. It catalyses the reaction (S)-4-amino-5-oxopentanoate = 5-aminolevulinate. It participates in porphyrin-containing compound metabolism; protoporphyrin-IX biosynthesis; 5-aminolevulinate from L-glutamyl-tRNA(Glu): step 2/2. This is Glutamate-1-semialdehyde 2,1-aminomutase from Methanoregula boonei (strain DSM 21154 / JCM 14090 / 6A8).